We begin with the raw amino-acid sequence, 217 residues long: tRNA (guanine-N(7)-)-methyltransferase (217 aa).

S-adenosyl-L-methionine is bound by residues Glu-45, Glu-70, Asp-97, and Asp-119. Residue Asp-119 is part of the active site. Lys-123 lines the substrate pocket. An interaction with RNA region spans residues 125–130 (RHEKRR). Substrate contacts are provided by residues Asp-155 and 195-198 (TEYE).

This sequence belongs to the class I-like SAM-binding methyltransferase superfamily. TrmB family.

The enzyme catalyses guanosine(46) in tRNA + S-adenosyl-L-methionine = N(7)-methylguanosine(46) in tRNA + S-adenosyl-L-homocysteine. The protein operates within tRNA modification; N(7)-methylguanine-tRNA biosynthesis. Catalyzes the formation of N(7)-methylguanine at position 46 (m7G46) in tRNA. The polypeptide is tRNA (guanine-N(7)-)-methyltransferase (Lactobacillus helveticus (strain DPC 4571)).